Consider the following 474-residue polypeptide: MKLNDTIVALATPSGAGAIAIIRVSGPDALEIVAPLFKAKSKKDLAKQPTHTLHLGNVMDGERTIDEVLASVFRAPKSYTGEETVELSCHGSPYIQQEIIQLLIRKSCRSAEAGEFTLRAFLNAKMDLSQAEAVADLINSENAASHQMAMQQMRGGFSNEIQKLREELLNFASLIELELDFAEEDVEFANRDQFKDLVSKIQTVLKRLLDSFATGNVLKNGIPVAIVGEPNVGKSTLLNALLNEERAIVSEIAGTTRDTIEDEMSIGGVGFRFIDTAGIRETKDVVESIGIKKTFEKISQAQVVVYLVDSSQIAVNRERLQQVRIEIEKIKNKFPQKPLLIIANKTDRLADEEIHNLKTKLEEISSHAERAQFLLLSAKTNLGVEELKEKLLEYVNTGALRNSDTIVTNSRHYAALLKALEEINKVEEGLNADLSGDLLAIDIRQALHHFGEITGEITNDDLLGNIFANFCIGK.

The (6S)-5-formyl-5,6,7,8-tetrahydrofolate site is built by Arg-23, Glu-86, and Lys-125. The TrmE-type G domain maps to 221 to 396; sequence GIPVAIVGEP…LKEKLLEYVN (176 aa). A K(+)-binding site is contributed by Asn-231. GTP is bound by residues 231–236, 250–256, and 275–278; these read NVGKST, SEIAGTT, and DTAG. Ser-235 provides a ligand contact to Mg(2+). Positions 250, 252, and 255 each coordinate K(+). Thr-256 contributes to the Mg(2+) binding site. Residue Lys-474 participates in (6S)-5-formyl-5,6,7,8-tetrahydrofolate binding.

This sequence belongs to the TRAFAC class TrmE-Era-EngA-EngB-Septin-like GTPase superfamily. TrmE GTPase family. In terms of assembly, homodimer. Heterotetramer of two MnmE and two MnmG subunits. It depends on K(+) as a cofactor.

The protein resides in the cytoplasm. Exhibits a very high intrinsic GTPase hydrolysis rate. Involved in the addition of a carboxymethylaminomethyl (cmnm) group at the wobble position (U34) of certain tRNAs, forming tRNA-cmnm(5)s(2)U34. The chain is tRNA modification GTPase MnmE from Christiangramia forsetii (strain DSM 17595 / CGMCC 1.15422 / KT0803) (Gramella forsetii).